The sequence spans 418 residues: Histidine--tRNA ligase (418 aa).

Belongs to the class-II aminoacyl-tRNA synthetase family.

Its subcellular location is the cytoplasm. The catalysed reaction is tRNA(His) + L-histidine + ATP = L-histidyl-tRNA(His) + AMP + diphosphate + H(+). This is Histidine--tRNA ligase from Methanococcus maripaludis (strain C6 / ATCC BAA-1332).